The primary structure comprises 475 residues: Gamma-aminobutyric acid receptor subunit gamma-2 (475 aa).

The first 39 residues, 1 to 39 (MSSPNIWSTGSSVYSTPVFSQKMTLWILLLLSLYPGLTR), serve as a signal peptide directing secretion. Topologically, residues 41-275 (KSDDDYEDYA…FDLSRRMGYF (235 aa)) are extracellular. Asparagine 52 and asparagine 129 each carry an N-linked (GlcNAc...) asparagine glycan. Cysteines 190 and 204 form a disulfide. Asparagine 247 carries an N-linked (GlcNAc...) asparagine glycan. The chain crosses the membrane as a helical span at residues 276–296 (TIQTYIPCTLIVVLSWVSFWI). Over 297 to 302 (NKDAVP) the chain is Cytoplasmic. A helical transmembrane segment spans residues 303 to 322 (ARTSLGITTVLTMTTLSTIA). Over 323–334 (RKSLPKVSYVTA) the chain is Extracellular. The chain crosses the membrane as a helical span at residues 335–359 (MDLFVSVCFIFVFSALVEYGTLHYF). Residues 360 to 451 (VSNRKPSKDK…IHIRIAKMDS (92 aa)) are Cytoplasmic-facing. A Phosphoserine; by PKC modification is found at serine 382. A helical membrane pass occupies residues 452–472 (YARIFFPTAFCLFNLVYWVSY). Topologically, residues 473–475 (LYL) are extracellular.

This sequence belongs to the ligand-gated ion channel (TC 1.A.9) family. Gamma-aminobutyric acid receptor (TC 1.A.9.5) subfamily. GABRG2 sub-subfamily. In terms of assembly, heteropentamer, formed by a combination of alpha (GABRA1-6), beta (GABRB1-3), gamma (GABRG1-3), delta (GABRD), epsilon (GABRE), rho (GABRR1-3), pi (GABRP) and theta (GABRQ) chains, each subunit exhibiting distinct physiological and pharmacological properties. Interacts with GABARAP. Interacts with KIF21B. Identified in a complex of 720 kDa composed of LHFPL4, NLGN2, GABRA1, GABRB2, GABRG2 and GABRB3. Interacts with LHFPL4. Interacts with SHISA7; interaction leads to the regulation of GABA(A) receptor trafficking, channel deactivation kinetics and pharmacology. In terms of processing, palmitoylated by ZDHHC3/GODZ; required for the accumulation of GABA(A) receptors at the postsynaptic membrane of inhibitory GABAergic synapses. Post-translationally, glycosylated.

Its subcellular location is the postsynaptic cell membrane. The protein resides in the cell membrane. It localises to the cell projection. The protein localises to the dendrite. It is found in the cytoplasmic vesicle membrane. The enzyme catalyses chloride(in) = chloride(out). Its activity is regulated as follows. Allosterically activated by benzodiazepines. Activated by pentobarbital. Inhibited by the antagonist bicuculline. Inhibited by zinc ions. Potentiated by histamine. Gamma subunit of the heteropentameric ligand-gated chloride channel gated by gamma-aminobutyric acid (GABA), a major inhibitory neurotransmitter in the brain. GABA-gated chloride channels, also named GABA(A) receptors (GABAAR), consist of five subunits arranged around a central pore and contain GABA active binding site(s) located at the alpha and beta subunit interface(s). When activated by GABA, GABAARs selectively allow the flow of chloride anions across the cell membrane down their electrochemical gradient. Gamma-2/GABRG2-containing GABAARs are found at both synaptic and extrasynaptic sites. Chloride influx into the postsynaptic neuron following GABAAR opening decreases the neuron ability to generate a new action potential, thereby reducing nerve transmission. GABAARs containing alpha-1 and beta-2 or -3 subunits exhibit synaptogenic activity; the gamma-2 subunit being necessary but not sufficient to induce rapid synaptic contacts formation. Extrasynaptic gamma-2-containing receptors contribute to the tonic GABAergic inhibition. GABAARs function also as histamine receptor where histamine binds at the interface of two neighboring beta subunits and potentiates GABA response in a gamma-2 subunit-controlled manner. This Bos taurus (Bovine) protein is Gamma-aminobutyric acid receptor subunit gamma-2 (GABRG2).